The chain runs to 205 residues: MNSQPLRVGIGGPVGSGKTALTLALCLALRDRYNLAVVTNDIYTREDADFLVRNEALAPERIIGVETGGCPHTAIREDASINLEAVDQLNRRFEGLDLIIVESGGDNLSATFSPELSDLTIYVIDVSAGDKLPRKGGPGICKSDLLVINKIDLAPLVGASLEMMDSDTRRMRGEKPFVFSNQKTGQGLEQIIAFIERQGLLTAAA.

GTP is bound at residue 12–19 (GPVGSGKT).

This sequence belongs to the SIMIBI class G3E GTPase family. UreG subfamily. In terms of assembly, homodimer. UreD, UreF and UreG form a complex that acts as a GTP-hydrolysis-dependent molecular chaperone, activating the urease apoprotein by helping to assemble the nickel containing metallocenter of UreC. The UreE protein probably delivers the nickel.

Its subcellular location is the cytoplasm. Its function is as follows. Facilitates the functional incorporation of the urease nickel metallocenter. This process requires GTP hydrolysis, probably effectuated by UreG. This Pseudomonas savastanoi pv. phaseolicola (strain 1448A / Race 6) (Pseudomonas syringae pv. phaseolicola (strain 1448A / Race 6)) protein is Urease accessory protein UreG.